A 252-amino-acid chain; its full sequence is Imidazole glycerol phosphate synthase subunit HisF (252 aa).

Active-site residues include Asp-11 and Asp-130.

This sequence belongs to the HisA/HisF family. As to quaternary structure, heterodimer of HisH and HisF.

It localises to the cytoplasm. The catalysed reaction is 5-[(5-phospho-1-deoxy-D-ribulos-1-ylimino)methylamino]-1-(5-phospho-beta-D-ribosyl)imidazole-4-carboxamide + L-glutamine = D-erythro-1-(imidazol-4-yl)glycerol 3-phosphate + 5-amino-1-(5-phospho-beta-D-ribosyl)imidazole-4-carboxamide + L-glutamate + H(+). It functions in the pathway amino-acid biosynthesis; L-histidine biosynthesis; L-histidine from 5-phospho-alpha-D-ribose 1-diphosphate: step 5/9. Its function is as follows. IGPS catalyzes the conversion of PRFAR and glutamine to IGP, AICAR and glutamate. The HisF subunit catalyzes the cyclization activity that produces IGP and AICAR from PRFAR using the ammonia provided by the HisH subunit. This Hyphomonas neptunium (strain ATCC 15444) protein is Imidazole glycerol phosphate synthase subunit HisF.